A 185-amino-acid polypeptide reads, in one-letter code: uncharacterized protein (185 aa).

Residues 1–69 (MSSFIDSIKS…SSDCSRAERT (69 aa)) are Cytoplasmic-facing. Residues 70-90 (FNLILFAIVDLVICCESMAFF) traverse the membrane as a helical segment. Asn91 is a topological domain (extracellular). A helical transmembrane segment spans residues 92 to 112 (LLLKLPSMLLVSFLTMLVFSI). At 113-118 (SYSWSA) the chain is on the cytoplasmic side. The chain crosses the membrane as a helical span at residues 119–139 (FNWISFAFSSASFLMKACILF). Topologically, residues 140–185 (NSSFTWFGVKAVIAEDMLYRMVRGLFCASFVKQLQTTFLATAIVLC) are extracellular.

The protein localises to the membrane. This is an uncharacterized protein from Saccharomyces cerevisiae (strain ATCC 204508 / S288c) (Baker's yeast).